The primary structure comprises 475 residues: AAA-ATPase At1g43910 (475 aa).

Residues 11–28 (VSAVFSLYTSFSAITMLF) traverse the membrane as a helical segment. The residue at position 85 (T85) is a Phosphothreonine. Residue 246-253 (GPPGTGKS) participates in ATP binding. 2 disordered regions span residues 306–328 (SRRR…PQKR) and 453–475 (KGED…EAET). A compositionally biased stretch (acidic residues) spans 457–467 (SSVEEEGEIED).

The protein belongs to the AAA ATPase family. BCS1 subfamily. Mg(2+) is required as a cofactor. As to expression, expressed in developing shoots.

It localises to the membrane. The catalysed reaction is ATP + H2O = ADP + phosphate + H(+). The polypeptide is AAA-ATPase At1g43910 (Arabidopsis thaliana (Mouse-ear cress)).